Here is a 162-residue protein sequence, read N- to C-terminus: CASP-like protein 1C1 (162 aa).

Topologically, residues 1-7 (MFSAKAR) are cytoplasmic. A helical transmembrane segment spans residues 8-28 (WIVAVVLRVAAAGAAAVAAVL). Residues 29–52 (MAMSHDEVIVYGMEVQAKFRYTPS) lie on the Extracellular side of the membrane. A helical transmembrane segment spans residues 53-73 (LVFFVAANAAVSACSLVVLLV). Residues 74 to 83 (PSSTSKLAAR) lie on the Cytoplasmic side of the membrane. Residues 84-104 (LLLMADVVLGMVLAGAFAAAG) form a helical membrane-spanning segment. The Extracellular portion of the chain corresponds to 105 to 135 (AMAELGKNGNSHAGWIAICVQVPLFCDRVRS). Residues 136–156 (ALVAGSATIVLYYLMLMYSIY) traverse the membrane as a helical segment. At 157–162 (TLPMFP) the chain is on the cytoplasmic side.

The protein belongs to the Casparian strip membrane proteins (CASP) family. In terms of assembly, homodimer and heterodimers.

It localises to the cell membrane. In Oryza sativa subsp. japonica (Rice), this protein is CASP-like protein 1C1.